A 156-amino-acid chain; its full sequence is MKLNEIKDNEGATKNRKRLGRGIGSGSGKTAGRGVKGQKARSGVAINGFEGGQMPIYRRLPKRGFNNIFASEFVVVSLGRIQAAVDAKKLDASKTVDAAALKAAGVIRRVKDGVRVLADGELKAKVSLEVAGASKPAIEKIEKAGGSINLLSAAAE.

Residues 1-13 (MKLNEIKDNEGAT) show a composition bias toward basic and acidic residues. Positions 1–39 (MKLNEIKDNEGATKNRKRLGRGIGSGSGKTAGRGVKGQK) are disordered. Residues 21–35 (RGIGSGSGKTAGRGV) show a composition bias toward gly residues.

The protein belongs to the universal ribosomal protein uL15 family. As to quaternary structure, part of the 50S ribosomal subunit.

In terms of biological role, binds to the 23S rRNA. In Rhizobium meliloti (strain 1021) (Ensifer meliloti), this protein is Large ribosomal subunit protein uL15.